Consider the following 445-residue polypeptide: Competence protein E (445 aa).

Residues 1 to 23 (MKKYFLKCGYFLVCFCLPLIVFA) form the signal peptide.

This sequence belongs to the bacterial secretin family. PilQ subfamily.

It localises to the cell outer membrane. In terms of biological role, involved in transformation (genetic competence for DNA uptake). In Haemophilus influenzae (strain ATCC 51907 / DSM 11121 / KW20 / Rd), this protein is Competence protein E (comE).